We begin with the raw amino-acid sequence, 398 residues long: Acetyl-CoA acetyltransferase (398 aa).

Ser2 carries the N-acetylserine modification. Catalysis depends on Cys91, which acts as the Acyl-thioester intermediate. CoA is bound by residues Tyr186 and Lys231. Tyr186 serves as a coordination point for K(+). K(+) is bound by residues Ala248, Ala249, and Ala251. Ser252 is a binding site for CoA. Val350 is a binding site for K(+). Residues His354 and Cys384 each act as proton acceptor in the active site.

The protein belongs to the thiolase-like superfamily. Thiolase family. In terms of assembly, homotetramer.

Its subcellular location is the cytoplasm. It is found in the cytosol. The catalysed reaction is 2 acetyl-CoA = acetoacetyl-CoA + CoA. It functions in the pathway metabolic intermediate biosynthesis; (R)-mevalonate biosynthesis; (R)-mevalonate from acetyl-CoA: step 1/3. Acetyl-CoA acetyltransferase; part of the first module of ergosterol biosynthesis pathway that includes the early steps of the pathway, conserved across all eukaryotes, and which results in the formation of mevalonate from acetyl-coenzyme A (acetyl-CoA). ERG10 catalyzes the formation of acetoacetyl-CoA from acetyl-CoA. The first module starts with the action of the cytosolic acetyl-CoA acetyltransferase ERG10 that catalyzes the formation of acetoacetyl-CoA. The hydroxymethylglutaryl-CoA synthase ERG13 then condenses acetyl-CoA with acetoacetyl-CoA to form HMG-CoA. The rate-limiting step of the early module is the reduction to mevalonate by the 3-hydroxy-3-methylglutaryl-coenzyme A (HMG-CoA) reductases HMG1 and HMG2 which are derived from a single ancestral HMGR gene by gene duplication. This Saccharomyces cerevisiae (strain ATCC 204508 / S288c) (Baker's yeast) protein is Acetyl-CoA acetyltransferase.